The primary structure comprises 197 residues: Probable nicotinate-nucleotide adenylyltransferase (197 aa).

This sequence belongs to the NadD family.

The catalysed reaction is nicotinate beta-D-ribonucleotide + ATP + H(+) = deamido-NAD(+) + diphosphate. Its pathway is cofactor biosynthesis; NAD(+) biosynthesis; deamido-NAD(+) from nicotinate D-ribonucleotide: step 1/1. Its function is as follows. Catalyzes the reversible adenylation of nicotinate mononucleotide (NaMN) to nicotinic acid adenine dinucleotide (NaAD). This is Probable nicotinate-nucleotide adenylyltransferase from Chlorobium phaeobacteroides (strain DSM 266 / SMG 266 / 2430).